The chain runs to 128 residues: Iron-sulfur cluster insertion protein ErpA (128 aa).

3 residues coordinate iron-sulfur cluster: cysteine 56, cysteine 120, and cysteine 122.

Belongs to the HesB/IscA family. In terms of assembly, homodimer. It depends on iron-sulfur cluster as a cofactor.

In terms of biological role, required for insertion of 4Fe-4S clusters for at least IspG. This is Iron-sulfur cluster insertion protein ErpA from Xanthomonas campestris pv. campestris (strain 8004).